The following is a 334-amino-acid chain: Holliday junction branch migration complex subunit RuvB (334 aa).

The tract at residues 4-184 is large ATPase domain (RuvB-L); it reads ADRLIQPQDL…FGIPLRLEFY (181 aa). Residues arginine 24, glycine 65, lysine 68, threonine 69, threonine 70, 131-133, arginine 174, tyrosine 184, and arginine 221 each bind ATP; that span reads EDY. Threonine 69 provides a ligand contact to Mg(2+). The small ATPAse domain (RuvB-S) stretch occupies residues 185–255; that stretch reads NVRDLSSIVA…VAQSALDLLD (71 aa). The interval 258–334 is head domain (RuvB-H); the sequence is SEGFDYMDRK…YSHFDLIKPD (77 aa). DNA-binding residues include arginine 294, arginine 313, and arginine 318.

Belongs to the RuvB family. As to quaternary structure, homohexamer. Forms an RuvA(8)-RuvB(12)-Holliday junction (HJ) complex. HJ DNA is sandwiched between 2 RuvA tetramers; dsDNA enters through RuvA and exits via RuvB. An RuvB hexamer assembles on each DNA strand where it exits the tetramer. Each RuvB hexamer is contacted by two RuvA subunits (via domain III) on 2 adjacent RuvB subunits; this complex drives branch migration. In the full resolvosome a probable DNA-RuvA(4)-RuvB(12)-RuvC(2) complex forms which resolves the HJ.

The protein resides in the cytoplasm. It carries out the reaction ATP + H2O = ADP + phosphate + H(+). Its function is as follows. The RuvA-RuvB-RuvC complex processes Holliday junction (HJ) DNA during genetic recombination and DNA repair, while the RuvA-RuvB complex plays an important role in the rescue of blocked DNA replication forks via replication fork reversal (RFR). RuvA specifically binds to HJ cruciform DNA, conferring on it an open structure. The RuvB hexamer acts as an ATP-dependent pump, pulling dsDNA into and through the RuvAB complex. RuvB forms 2 homohexamers on either side of HJ DNA bound by 1 or 2 RuvA tetramers; 4 subunits per hexamer contact DNA at a time. Coordinated motions by a converter formed by DNA-disengaged RuvB subunits stimulates ATP hydrolysis and nucleotide exchange. Immobilization of the converter enables RuvB to convert the ATP-contained energy into a lever motion, pulling 2 nucleotides of DNA out of the RuvA tetramer per ATP hydrolyzed, thus driving DNA branch migration. The RuvB motors rotate together with the DNA substrate, which together with the progressing nucleotide cycle form the mechanistic basis for DNA recombination by continuous HJ branch migration. Branch migration allows RuvC to scan DNA until it finds its consensus sequence, where it cleaves and resolves cruciform DNA. This chain is Holliday junction branch migration complex subunit RuvB, found in Shewanella amazonensis (strain ATCC BAA-1098 / SB2B).